The sequence spans 264 residues: MKKLKLHGFNNLTKSLSFCIYDICYAKTAEERDGYIAYIDELYNANRLTEILSETCSIIGANILNIARQDYEPQGASVTILVSEEPVDPQLIDKTEHPGPLPEAVVAHLDKSHICVHTYPESHPEGGLCTFRADIEVSTCGVISPLKALNYLIHQLESDIVTIDYRVRGFTRDVNGMKHFIDHEINSIQNFMSDDMKSLYDMVDVNVYQENIFHTKMLLKEFDLKHYMFHTKPEDLTETERKEITAALWKEMREIYYGRNIPAV.

Residue serine 112 is the Schiff-base intermediate with substrate; via pyruvic acid of the active site. Position 112 is a pyruvic acid (Ser); by autocatalysis (serine 112). Histidine 117 functions as the Proton acceptor; for processing activity in the catalytic mechanism. Cysteine 140 functions as the Proton donor; for catalytic activity in the catalytic mechanism.

Belongs to the prokaryotic AdoMetDC family. Type 2 subfamily. In terms of assembly, heterooctamer of four alpha and four beta chains arranged as a tetramer of alpha/beta heterodimers. Requires pyruvate as cofactor. Is synthesized initially as an inactive proenzyme. Formation of the active enzyme involves a self-maturation process in which the active site pyruvoyl group is generated from an internal serine residue via an autocatalytic post-translational modification. Two non-identical subunits are generated from the proenzyme in this reaction, and the pyruvate is formed at the N-terminus of the alpha chain, which is derived from the carboxyl end of the proenzyme. The post-translation cleavage follows an unusual pathway, termed non-hydrolytic serinolysis, in which the side chain hydroxyl group of the serine supplies its oxygen atom to form the C-terminus of the beta chain, while the remainder of the serine residue undergoes an oxidative deamination to produce ammonia and the pyruvoyl group blocking the N-terminus of the alpha chain.

It carries out the reaction S-adenosyl-L-methionine + H(+) = S-adenosyl 3-(methylsulfanyl)propylamine + CO2. It functions in the pathway amine and polyamine biosynthesis; S-adenosylmethioninamine biosynthesis; S-adenosylmethioninamine from S-adenosyl-L-methionine: step 1/1. Functionally, catalyzes the decarboxylation of S-adenosylmethionine to S-adenosylmethioninamine (dcAdoMet), the propylamine donor required for the synthesis of the polyamines spermine and spermidine from the diamine putrescine. The sequence is that of S-adenosylmethionine decarboxylase proenzyme from Citrobacter koseri (strain ATCC BAA-895 / CDC 4225-83 / SGSC4696).